A 249-amino-acid polypeptide reads, in one-letter code: Small ribosomal subunit protein uS3y (249 aa).

Residues 21-92 enclose the KH type-2 domain; sequence LNEVLTRELA…SVELYAEKVN (72 aa). Serine 212 carries the phosphoserine modification.

The protein belongs to the universal ribosomal protein uS3 family.

This chain is Small ribosomal subunit protein uS3y (RPS3B), found in Arabidopsis thaliana (Mouse-ear cress).